The chain runs to 323 residues: Fructose-1,6-bisphosphatase class 1 (323 aa).

Residues Glu-88, Asp-107, Leu-109, and Asp-110 each contribute to the Mg(2+) site. Residues 110-113 (DGSS) and Asn-200 each bind substrate. Mg(2+) is bound at residue Glu-272.

This sequence belongs to the FBPase class 1 family. In terms of assembly, homotetramer. It depends on Mg(2+) as a cofactor.

The protein localises to the cytoplasm. It catalyses the reaction beta-D-fructose 1,6-bisphosphate + H2O = beta-D-fructose 6-phosphate + phosphate. It participates in carbohydrate biosynthesis; gluconeogenesis. The sequence is that of Fructose-1,6-bisphosphatase class 1 from Acinetobacter baumannii (strain ACICU).